The primary structure comprises 921 residues: Retinoblastoma-associated protein (921 aa).

The segment at 1–36 is disordered; that stretch reads MPPKAPRRAAAAEPPPPPPPPPREDDPAQDSGPEEL. A N,N-dimethylproline; by NTM1 modification is found at proline 2. A phosphoserine mark is found at serine 31 and serine 243. 4 positions are modified to phosphothreonine: threonine 246, threonine 350, threonine 364, and threonine 367. Residues 341 to 360 are disordered; it reads PIDSFETERTPRKNNPDEEA. Residues 346-356 are compositionally biased toward basic and acidic residues; sequence ETERTPRKNNP. A domain A region spans residues 367–573; that stretch reads TPVRTVMNTI…FDLIKQSKDG (207 aa). Residues 367 to 764 form a pocket; binds T and E1A region; that stretch reads TPVRTVMNTI…QRLKTNILQY (398 aa). Serine 561 is modified (phosphoserine; by CDK2). The segment at 574-632 is spacer; that stretch reads EGPDNLEPACPLSLPLQGNHTAADMYLSPLRSPKKRTSTTRVNSAANTETQAASAFHTQ. Phosphoserine is present on residues serine 601, serine 605, and serine 617. The interval 633-764 is domain B; the sequence is KPLKSTSLAL…QRLKTNILQY (132 aa). The tract at residues 756-921 is interaction with LIMD1; the sequence is RLKTNILQYA…SKDVSNKEEK (166 aa). The segment at 764 to 921 is domain; mediates interaction with E4F1; it reads YASTRPPTLS…SKDVSNKEEK (158 aa). 4 positions are modified to phosphoserine: serine 773, serine 781, serine 788, and serine 800. N6-methyllysine; by SMYD2 is present on lysine 803. Serine 804 carries the phosphoserine modification. 4 positions are modified to phosphothreonine: threonine 814, threonine 816, threonine 819, and threonine 834. Position 848 is a phosphoserine (serine 848). Position 853 is an N6-methyllysine; by SMYD2 (lysine 853). Positions 853 to 869 match the Bipartite nuclear localization signal motif; that stretch reads KRSAEGGNPPKPLKKLR. An N6-acetyllysine; by PCAF mark is found at lysine 866 and lysine 867. Residues 872 to 921 are disordered; it reads IEGADEADGSKHLPAESKFQQKLAEMTSTRTRMQKQRMNESKDVSNKEEK. Over residues 908-921 the composition is skewed to basic and acidic residues; it reads RMNESKDVSNKEEK.

This sequence belongs to the retinoblastoma protein (RB) family. As to quaternary structure, the hypophosphorylated form interacts with and sequesters the E2F1 transcription factor, thereby inhibiting E2F1 transcription. Interacts with heterodimeric E2F/DP transcription factor complexes containing TFDP1 and either E2F1/E2F, E2F3, E2F4 or E2F5, or TFDP2 and E2F4. Interacts (when hyperphosphorylated and hypophosphorylated) with PKP3; the interaction inhibits RB1 interaction with and repression of the transcription factor E2F1, potentially via sequestering RB1 to the cytoplasm. The unphosphorylated form interacts with EID1, ARID3B, KDM5A, SUV39H1, MJD2A/JHDM3A and THOC1. Interacts with the N-terminal domain of TAF1. Interacts with SNW1, ATAD5, AATF, DNMT1, LIN9, LMNA, KMT5B, KMT5C, PELP1, UHRF2, TMPO-alpha and USP4. Interacts with GRIP1 and UBR4. Interacts with ARID4A and KDM5B. Interacts with E4F1 and LIMD1. Interacts with SMARCA4/BRG1 and HDAC1. Interacts with USP4. Interacts (when methylated at Lys-853) with L3MBTL1. Binds to CDK1 and CDK2. Interacts with CHEK2; phosphorylates RB1. Interacts with PRMT2. Interacts with CEBPA. P-TEFB complex interacts with RB1; promotes phosphorylation of RB1. Interacts with RBBP9; the interaction disrupts RB1 binding to E2F1. Interacts with KAT2B/PCAF and EP300/P300. Interacts with PAX5. Interacts (phosphorylated and unphosphorylated) with BLCAP. May interact with NDC80. (Microbial infection) Interacts with adenovirus E1a protein. In terms of assembly, (Microbial infection) Interacts with SV40 large T antigen. Phosphorylated. Phosphorylated by CDK6 and CDK4, and subsequently by CDK2 at Ser-561 in G1, thereby releasing E2F1 which is then able to activate cell growth. Dephosphorylated at the late M phase. Phosphorylation of threonine residues in domain C promotes interaction between the C-terminal domain C and the Pocket domain, and thereby inhibits interactions with heterodimeric E2F/DP transcription factor complexes. Dephosphorylated at Ser-788 by calcineruin upon calcium stimulation. CDK3/cyclin-C-mediated phosphorylation at Ser-800 and Ser-804 is required for G0-G1 transition. Phosphorylated by CDK1 and CDK2 upon TGFB1-mediated apoptosis. In terms of processing, monomethylation at Lys-803 by SMYD2 enhances phosphorylation at Ser-800 and Ser-804, and promotes cell cycle progression. Monomethylation at Lys-853 by SMYD2 promotes interaction with L3MBTL1. N-terminus is methylated by METTL11A/NTM1. Post-translationally, acetylated in the skin. Acetylation at Lys-866 and Lys-867 regulates subcellular localization during keratinocytes differentiation. As to expression, expressed in the cell nuclei of renal tubules, hepatocytes and skeletal muscles. Expressed in skin (at protein level).

The protein localises to the nucleus. The protein resides in the cytoplasm. Functionally, tumor suppressor that is a key regulator of the G1/S transition of the cell cycle. The hypophosphorylated form binds transcription regulators of the E2F family, preventing transcription of E2F-responsive genes. Both physically blocks E2Fs transactivating domain and recruits chromatin-modifying enzymes that actively repress transcription. Cyclin and CDK-dependent phosphorylation of RB1 induces its dissociation from E2Fs, thereby activating transcription of E2F responsive genes and triggering entry into S phase. RB1 also promotes the G0-G1 transition upon phosphorylation and activation by CDK3/cyclin-C. Directly involved in heterochromatin formation by maintaining overall chromatin structure and, in particular, that of constitutive heterochromatin by stabilizing histone methylation. Recruits and targets histone methyltransferases SUV39H1, KMT5B and KMT5C, leading to epigenetic transcriptional repression. Controls histone H4 'Lys-20' trimethylation. Inhibits the intrinsic kinase activity of TAF1. Mediates transcriptional repression by SMARCA4/BRG1 by recruiting a histone deacetylase (HDAC) complex to the c-FOS promoter. In resting neurons, transcription of the c-FOS promoter is inhibited by BRG1-dependent recruitment of a phospho-RB1-HDAC1 repressor complex. Upon calcium influx, RB1 is dephosphorylated by calcineurin, which leads to release of the repressor complex. In Mus musculus (Mouse), this protein is Retinoblastoma-associated protein (Rb1).